Consider the following 500-residue polypeptide: Allene oxide synthase 3 (500 aa).

The disordered stretch occupies residues 1 to 26 (MAPPPVNSGDAAAAATGEKSKLSPSG). Substrate contacts are provided by residues 297–298 (FN), Lys304, and 365–368 (PVEF). Residue Cys452 coordinates heme.

This sequence belongs to the cytochrome P450 family. It depends on heme as a cofactor. In terms of tissue distribution, not expressed in dark-grown seedlings.

The enzyme catalyses (13S)-hydroperoxy-(9Z,11E,15Z)-octadecatrienoate = (9Z,13S,15Z)-12,13-epoxyoctadeca-9,11,15-trienoate + H2O. Its pathway is lipid metabolism; oxylipin biosynthesis. Functionally, involved in the biosynthesis of jasmonic acid, a growth regulator that is implicated also as a signaling molecule in plant defense. Converts 13-hydroperoxylinolenic acid to 12,13-epoxylinolenic acid. This chain is Allene oxide synthase 3 (CYP74A3), found in Oryza sativa subsp. japonica (Rice).